Reading from the N-terminus, the 534-residue chain is Pentatricopeptide repeat-containing protein At5g50990 (534 aa).

6 PPR repeats span residues 128-158 (NVIT…MLSF), 164-198 (NKFS…GIEL), 199-229 (NAIL…VKRN), 230-264 (DVSI…HVSP), 265-295 (DSIT…MSRR), and 301-331 (KLEH…MPIE). The tract at residues 336 to 408 (IWRSLLSSSR…AKGKSWLEFG (73 aa)) is type E motif. The type E(+) motif stretch occupies residues 409–439 (GMIHRFKAGDTSHIETKAIYKVLEGLIQKTK). Residues 440–534 (SQGFVSDTDL…DGLCSCRDYW (95 aa)) form a type DYW motif region.

The protein belongs to the PPR family. PCMP-H subfamily.

In Arabidopsis thaliana (Mouse-ear cress), this protein is Pentatricopeptide repeat-containing protein At5g50990 (PCMP-H59).